We begin with the raw amino-acid sequence, 263 residues long: Ribosomal RNA small subunit methyltransferase J (263 aa).

S-adenosyl-L-methionine-binding positions include 108 to 109 (RD), 124 to 125 (ER), and Asp-178.

The protein belongs to the methyltransferase superfamily. RsmJ family.

The protein resides in the cytoplasm. The catalysed reaction is guanosine(1516) in 16S rRNA + S-adenosyl-L-methionine = N(2)-methylguanosine(1516) in 16S rRNA + S-adenosyl-L-homocysteine + H(+). Specifically methylates the guanosine in position 1516 of 16S rRNA. This is Ribosomal RNA small subunit methyltransferase J from Idiomarina loihiensis (strain ATCC BAA-735 / DSM 15497 / L2-TR).